A 349-amino-acid polypeptide reads, in one-letter code: MNIQQALNHITKNIHLTQAQMEDVMRSIMQGEATEAQIGALMMGLRMKGESIDEITAAARVMRELAIKIDVSDIQYLVDIVGTGGDGQNLFNVSTASSFVIAAAGATIAKHGNRGVSSKSGSSDLLEQAGINLDLDMQQTERCIREMGVGFLFAPNHHKAMKYAVGPRRELGIRSIFNLLGPLTNPAGVKRFVIGVFSDELCRPIAEVMKQLGAEHVMVVHSKDGLDEISLASQTYIAELKNGEVTEWVLNPEDVNIPSQTLSGLIVEDSNASLKLIKDALGRKKSDIGEKAANMIALNAGAGIYVSGLATSYKQGVALAHDIIYGGQALEKMSILSEFTKALKEYANN.

Residues G82, 85 to 86, 92 to 95, 110 to 118, and S122 each bind 5-phospho-alpha-D-ribose 1-diphosphate; these read GD, NVST, and KHGNRGVSS. G82 is an anthranilate binding site. Residue S94 coordinates Mg(2+). N113 is a binding site for anthranilate. R168 provides a ligand contact to anthranilate. Mg(2+)-binding residues include D227 and E228.

Belongs to the anthranilate phosphoribosyltransferase family. Homodimer. Mg(2+) serves as cofactor.

It carries out the reaction N-(5-phospho-beta-D-ribosyl)anthranilate + diphosphate = 5-phospho-alpha-D-ribose 1-diphosphate + anthranilate. It functions in the pathway amino-acid biosynthesis; L-tryptophan biosynthesis; L-tryptophan from chorismate: step 2/5. In terms of biological role, catalyzes the transfer of the phosphoribosyl group of 5-phosphorylribose-1-pyrophosphate (PRPP) to anthranilate to yield N-(5'-phosphoribosyl)-anthranilate (PRA). The polypeptide is Anthranilate phosphoribosyltransferase (Acinetobacter baylyi (strain ATCC 33305 / BD413 / ADP1)).